The primary structure comprises 454 residues: T-box protein VegT (454 aa).

Positions 57-230 (LWSQFHQEGT…HNPFAKGFRE (174 aa)) form a DNA-binding region, T-box. Positions 229–241 (REQERSHKRDDVL) are enriched in basic and acidic residues. Disordered regions lie at residues 229 to 274 (REQE…ATRV) and 295 to 358 (ANQG…VPDS). Positions 308-325 (GVNQEQQVPTSSLNFYNK) are enriched in polar residues.

In terms of assembly, forms a repression complex on the promoters of the nodal/nr1 and siamois genes with the maternal factors tcf7l1/tcf3 and pouf5.1/oct-25. Interacts (via C-terminus) with tcf7l1/tcf3 (via N-terminus). Also interacts with the other POU-domain transcription factors pou5f1.2/oct-91 and pou5f1.3/oct-60.

The protein resides in the nucleus. Transcription factor required for both mesoderm and endoderm formation in the embryo; signaling determinants and concentration levels may determine which germ layer is formed. Acts together with beta-catenin to activate genes that are responsible for mesoderm induction including wnt-8, eomes t/bra, siamois, mix1 and sox17. Directly binds to promoter DNA. Patterns the mesoderm along the dorsoventral and posterior axis. Activates siamois gene transcription when alone or in combination with beta-catenin, but inhibits siamois transcription in combination with pou5f1.1/oct-25. The sequence is that of T-box protein VegT from Xenopus borealis (Kenyan clawed frog).